A 100-amino-acid chain; its full sequence is MAALTKADMAERLYEELGLNKREAKEMVEAFFDEIRGALSHNEQVKLSGFGNFDLRDKKQRPGRNPKTGEEIPISARRVVTFRPGQKLKQKVEAYAGTQS.

The disordered stretch occupies residues 53 to 72 (FDLRDKKQRPGRNPKTGEEI).

It belongs to the bacterial histone-like protein family. As to quaternary structure, heterodimer of an alpha and a beta chain.

In terms of biological role, this protein is one of the two subunits of integration host factor, a specific DNA-binding protein that functions in genetic recombination as well as in transcriptional and translational control. The sequence is that of Integration host factor subunit alpha from Marinobacter nauticus (strain ATCC 700491 / DSM 11845 / VT8) (Marinobacter aquaeolei).